A 234-amino-acid chain; its full sequence is ATP-dependent dethiobiotin synthetase BioD (234 aa).

12–17 (GAGKTI) is an ATP binding site. Threonine 16 contacts Mg(2+). The active site involves lysine 39. A substrate-binding site is contributed by threonine 43. ATP contacts are provided by residues aspartate 47, 108 to 111 (EGLG), 168 to 169 (SC), and 200 to 202 (PYL). Residues aspartate 47 and glutamate 108 each coordinate Mg(2+).

It belongs to the dethiobiotin synthetase family. In terms of assembly, homodimer. Mg(2+) is required as a cofactor.

It is found in the cytoplasm. The catalysed reaction is (7R,8S)-7,8-diammoniononanoate + CO2 + ATP = (4R,5S)-dethiobiotin + ADP + phosphate + 3 H(+). It catalyses the reaction (7R,8S)-8-amino-7-(carboxyamino)nonanoate + ATP = (4R,5S)-dethiobiotin + ADP + phosphate + H(+). Its pathway is cofactor biosynthesis; biotin biosynthesis; biotin from 7,8-diaminononanoate: step 1/2. In terms of biological role, catalyzes a mechanistically unusual reaction, the ATP-dependent insertion of CO2 between the N7 and N8 nitrogen atoms of 7,8-diaminopelargonic acid (DAPA, also called 7,8-diammoniononanoate) to form a ureido ring. This cyanobacterium does not encode bioA (which catalyzes the formation of the precursor for this reaction in the cannonical pathway), instead it encodes bioU, which replaces bioA and also performs the first half of the cannonical BioD reaction. Thus in this organism BioD has a different substrate. The polypeptide is ATP-dependent dethiobiotin synthetase BioD (Rippkaea orientalis (strain PCC 8801 / RF-1) (Cyanothece sp. (strain PCC 8801))).